The chain runs to 150 residues: MWKEFKEFAMKGNVIDLAVGVIIGGAFGKIVTSLVNDVIMPLVGLLLGQMDFSNAFITLGKGDFATIAEAQAAKVPTLNYGLFINNVVDFLIIAFTIFIVIKQINRFNRKKEVKEEVAEEKATKPCPYCYVEIHKEATRCPHCTSVLESP.

2 helical membrane passes run 14-34 and 81-101; these read VIDLAVGVIIGGAFGKIVTSL and GLFINNVVDFLIIAFTIFIVI.

Belongs to the MscL family. In terms of assembly, homopentamer.

It localises to the cell membrane. Its function is as follows. Channel that opens in response to stretch forces in the membrane lipid bilayer. May participate in the regulation of osmotic pressure changes within the cell. The chain is Large-conductance mechanosensitive channel from Desulfitobacterium hafniense (strain DSM 10664 / DCB-2).